Reading from the N-terminus, the 202-residue chain is Small ribosomal subunit protein uS4 (202 aa).

Residues 94-157 (SRLDSLVYRA…LEIPLIKNTL (64 aa)) enclose the S4 RNA-binding domain.

It belongs to the universal ribosomal protein uS4 family. Part of the 30S ribosomal subunit. Contacts protein S5. The interaction surface between S4 and S5 is involved in control of translational fidelity.

Functionally, one of the primary rRNA binding proteins, it binds directly to 16S rRNA where it nucleates assembly of the body of the 30S subunit. Its function is as follows. With S5 and S12 plays an important role in translational accuracy. The polypeptide is Small ribosomal subunit protein uS4 (Ureaplasma parvum serovar 3 (strain ATCC 27815 / 27 / NCTC 11736)).